The sequence spans 398 residues: MNIHEYQAKALLKSYGAPVAEGVAIFSADEAEAAAKKLPGPLYVVKSQIHAGGRGKGKFKELGPDAKGGVRLAKSVDEVVANAKDMLGNTLVTKQTGPAGKQVNRLYIEDGADIDRELYLSILVDRSVGQVAFVVSTEGGMDIEAVAEHTPEKIVTVAIDPEKGVTAENLKTLADALKLEGEARADAEKLFPILYKAFVEKDMSLLEVNPLIVMTNGRMRVLDAKVSFDGNALFRHEDVVALRDTTEEDDKEIEASKYDLAYVALDGNIGCMVNGAGLAMATMDIIKLYGAEPANFLDVGGGASKEKVTQAFKIITADPAVKGILVNIFGGIMKCDVIAEGVLAAVKEVGLKVPLVVRLEGTNVELGKKIINESGLNVISADDLDDAAQKIVAAVKGA.

In terms of domain architecture, ATP-grasp spans 9–254 (KALLKSYGAP…TTEEDDKEIE (246 aa)). Residues Lys46, 53–55 (GRG), Glu109, Ala112, and Glu117 each bind ATP. Residues Asn209 and Asp223 each contribute to the Mg(2+) site. Residues Asn274 and 331–333 (GIM) each bind substrate.

It belongs to the succinate/malate CoA ligase beta subunit family. As to quaternary structure, heterotetramer of two alpha and two beta subunits. Mg(2+) is required as a cofactor.

It carries out the reaction succinate + ATP + CoA = succinyl-CoA + ADP + phosphate. The enzyme catalyses GTP + succinate + CoA = succinyl-CoA + GDP + phosphate. It participates in carbohydrate metabolism; tricarboxylic acid cycle; succinate from succinyl-CoA (ligase route): step 1/1. Succinyl-CoA synthetase functions in the citric acid cycle (TCA), coupling the hydrolysis of succinyl-CoA to the synthesis of either ATP or GTP and thus represents the only step of substrate-level phosphorylation in the TCA. The beta subunit provides nucleotide specificity of the enzyme and binds the substrate succinate, while the binding sites for coenzyme A and phosphate are found in the alpha subunit. In Rhizobium meliloti (strain 1021) (Ensifer meliloti), this protein is Succinate--CoA ligase [ADP-forming] subunit beta.